A 489-amino-acid polypeptide reads, in one-letter code: N-succinylglutamate 5-semialdehyde dehydrogenase (489 aa).

216 to 221 (GSAATG) contacts NAD(+). Residues E239 and C273 contribute to the active site.

It belongs to the aldehyde dehydrogenase family. AstD subfamily.

It carries out the reaction N-succinyl-L-glutamate 5-semialdehyde + NAD(+) + H2O = N-succinyl-L-glutamate + NADH + 2 H(+). Its pathway is amino-acid degradation; L-arginine degradation via AST pathway; L-glutamate and succinate from L-arginine: step 4/5. Its function is as follows. Catalyzes the NAD-dependent reduction of succinylglutamate semialdehyde into succinylglutamate. The protein is N-succinylglutamate 5-semialdehyde dehydrogenase of Erwinia tasmaniensis (strain DSM 17950 / CFBP 7177 / CIP 109463 / NCPPB 4357 / Et1/99).